The chain runs to 345 residues: Selenide, water dikinase (345 aa).

The active site involves cysteine 15. Residues lysine 18 and 46 to 48 (SKD) each bind ATP. Aspartate 49 contacts Mg(2+). ATP-binding positions include aspartate 66, aspartate 89, and 137–139 (GHS). Aspartate 89 is a Mg(2+) binding site. Aspartate 225 serves as a coordination point for Mg(2+).

Belongs to the selenophosphate synthase 1 family. Class I subfamily. Homodimer. It depends on Mg(2+) as a cofactor.

It catalyses the reaction hydrogenselenide + ATP + H2O = selenophosphate + AMP + phosphate + 2 H(+). Synthesizes selenophosphate from selenide and ATP. The polypeptide is Selenide, water dikinase (Aeromonas hydrophila subsp. hydrophila (strain ATCC 7966 / DSM 30187 / BCRC 13018 / CCUG 14551 / JCM 1027 / KCTC 2358 / NCIMB 9240 / NCTC 8049)).